The primary structure comprises 423 residues: UDP-N-acetylglucosamine 1-carboxyvinyltransferase 1 (423 aa).

Phosphoenolpyruvate is bound at residue 23–24; it reads KN. A UDP-N-acetyl-alpha-D-glucosamine-binding site is contributed by Arg-96. Catalysis depends on Cys-120, which acts as the Proton donor. 2-(S-cysteinyl)pyruvic acid O-phosphothioketal is present on Cys-120. UDP-N-acetyl-alpha-D-glucosamine-binding positions include 125-129, Asp-309, and Val-331; that span reads RPIDL.

Belongs to the EPSP synthase family. MurA subfamily.

It localises to the cytoplasm. The catalysed reaction is phosphoenolpyruvate + UDP-N-acetyl-alpha-D-glucosamine = UDP-N-acetyl-3-O-(1-carboxyvinyl)-alpha-D-glucosamine + phosphate. Its pathway is cell wall biogenesis; peptidoglycan biosynthesis. Cell wall formation. Adds enolpyruvyl to UDP-N-acetylglucosamine. The protein is UDP-N-acetylglucosamine 1-carboxyvinyltransferase 1 of Streptococcus thermophilus (strain ATCC BAA-250 / LMG 18311).